The sequence spans 374 residues: Homoserine O-succinyltransferase (374 aa).

In terms of domain architecture, AB hydrolase-1 spans 47 to 357 (NAILVCHALS…NFGHDSFLME (311 aa)). Ser-153 (nucleophile) is an active-site residue. Arg-223 is a substrate binding site. Residues Asp-318 and His-351 contribute to the active site. Asp-352 contributes to the substrate binding site.

It belongs to the AB hydrolase superfamily. MetX family. Homodimer.

It localises to the cytoplasm. The enzyme catalyses L-homoserine + succinyl-CoA = O-succinyl-L-homoserine + CoA. Its pathway is amino-acid biosynthesis; L-methionine biosynthesis via de novo pathway; O-succinyl-L-homoserine from L-homoserine: step 1/1. Transfers a succinyl group from succinyl-CoA to L-homoserine, forming succinyl-L-homoserine. The chain is Homoserine O-succinyltransferase from Dechloromonas aromatica (strain RCB).